The sequence spans 100 residues: Small ubiquitin-related modifier 1 (100 aa).

The 78-residue stretch at Glu19–Gly96 folds into the Ubiquitin-like domain. Residue Gly96 forms a Glycyl lysine isopeptide (Gly-Lys) (interchain with K-? in acceptor proteins) linkage. Residues Cys97 to Asp100 constitute a propeptide that is removed on maturation.

This sequence belongs to the ubiquitin family. SUMO subfamily. In terms of assembly, interacts with sae2, ube2i, ranbp2, pias1 and pias2. Covalently attached to a number of proteins. Post-translationally, cleavage of precursor form by a sentrin-specific protease is necessary for function.

It localises to the nucleus membrane. Its subcellular location is the nucleus speckle. It is found in the cytoplasm. The protein resides in the nucleus. The protein localises to the PML body. It localises to the cell membrane. In terms of biological role, ubiquitin-like protein that can be covalently attached to proteins as a monomer or a lysine-linked polymer. Covalent attachment via an isopeptide bond to its substrates requires prior activation by the E1 complex sae1-sae2 and linkage to the E2 enzyme ube2i. This post-translational modification on lysine residues of proteins plays a crucial role in a number of cellular processes such as nuclear transport, DNA replication and repair, mitosis and signal transduction. Polymeric sumo1 chains are also susceptible to polyubiquitination which functions as a signal for proteasomal degradation of modified proteins. The polypeptide is Small ubiquitin-related modifier 1 (sumo1) (Danio rerio (Zebrafish)).